We begin with the raw amino-acid sequence, 98 residues long: NADH-ubiquinone oxidoreductase chain 4L (98 aa).

3 helical membrane passes run 1-21 (MSLVYMNIMMAFTVSLTGLLM), 29-49 (SLLCLEGMMLSLFILATLMIL), and 61-81 (IILLVFAACEAALGLSLLVMV).

Belongs to the complex I subunit 4L family. As to quaternary structure, core subunit of respiratory chain NADH dehydrogenase (Complex I) which is composed of 45 different subunits.

The protein localises to the mitochondrion inner membrane. The enzyme catalyses a ubiquinone + NADH + 5 H(+)(in) = a ubiquinol + NAD(+) + 4 H(+)(out). Its function is as follows. Core subunit of the mitochondrial membrane respiratory chain NADH dehydrogenase (Complex I) which catalyzes electron transfer from NADH through the respiratory chain, using ubiquinone as an electron acceptor. Part of the enzyme membrane arm which is embedded in the lipid bilayer and involved in proton translocation. The chain is NADH-ubiquinone oxidoreductase chain 4L (MT-ND4L) from Ovis aries (Sheep).